We begin with the raw amino-acid sequence, 527 residues long: Peptidoglycan O-acetyltransferase (527 aa).

11 helical membrane passes run 11-31, 55-75, 96-116, 131-151, 187-207, 228-248, 280-300, 352-372, 397-417, 463-483, and 505-525; these read VFVL…VGFL, LFFY…SIVF, LILG…TDFF, LHLI…AYLM, HFLD…GPIV, NIAL…VIAD, LYFD…FFNI, LILV…FIIW, MPKI…WVFF, IMYA…SFCL, and LLLS…FLYF. H363 is a catalytic residue.

Belongs to the membrane-bound acyltransferase family.

Its subcellular location is the cell membrane. Functionally, catalyzes the O-acetylation of peptidoglycan (PG), an important mechanism that appears to confer lysozyme resistance and contributes to pathogen persistence in the host. The sequence is that of Peptidoglycan O-acetyltransferase (patA) from Helicobacter pylori (strain ATCC 700392 / 26695) (Campylobacter pylori).